We begin with the raw amino-acid sequence, 416 residues long: Serine protease inhibitor A3K (416 aa).

The N-terminal stretch at M1–C20 is a signal peptide. Residues N102, N182, N220, and N267 are each glycosylated (N-linked (GlcNAc...) asparagine). Residues G365–R392 form an RCL region.

The protein belongs to the serpin family. Post-translationally, N-glycosylated. In terms of tissue distribution, liver and plasma.

It is found in the secreted. Its function is as follows. Binds to and inhibits kallikreins. Inhibits trypsin but not chymotrypsin or elastase. The sequence is that of Serine protease inhibitor A3K (Serpina3k) from Rattus norvegicus (Rat).